A 219-amino-acid polypeptide reads, in one-letter code: Endo-type membrane-bound lytic murein transglycosylase A-like protein (219 aa).

The protein belongs to the transglycosylase Slt family.

The catalysed reaction is Endolytic cleavage of the (1-&gt;4)-beta-glycosidic linkage between N-acetylmuramic acid (MurNAc) and N-acetylglucosamine (GlcNAc) residues in peptidoglycan with concomitant formation of a 1,6-anhydrobond in the MurNAc residue.. Functionally, murein-degrading enzyme. May play a role in recycling of muropeptides during cell elongation and/or cell division (Potential). In Shigella flexneri, this protein is Endo-type membrane-bound lytic murein transglycosylase A-like protein.